Reading from the N-terminus, the 188-residue chain is CMT1A duplicated region transcript 15 protein (188 aa).

As to expression, expressed in fetal heart, kidney, liver, lung and spleen.

The protein is CMT1A duplicated region transcript 15 protein (CDRT15) of Homo sapiens (Human).